Here is a 156-residue protein sequence, read N- to C-terminus: 6,7-dimethyl-8-ribityllumazine synthase (156 aa).

Residues phenylalanine 23, serine 57 to glutamate 59, and alanine 81 to isoleucine 83 contribute to the 5-amino-6-(D-ribitylamino)uracil site. Residue glycine 86–threonine 87 participates in (2S)-2-hydroxy-3-oxobutyl phosphate binding. Histidine 89 serves as the catalytic Proton donor. Residue phenylalanine 114 coordinates 5-amino-6-(D-ribitylamino)uracil. Arginine 128 provides a ligand contact to (2S)-2-hydroxy-3-oxobutyl phosphate.

Belongs to the DMRL synthase family. In terms of assembly, forms an icosahedral capsid composed of 60 subunits, arranged as a dodecamer of pentamers.

The enzyme catalyses (2S)-2-hydroxy-3-oxobutyl phosphate + 5-amino-6-(D-ribitylamino)uracil = 6,7-dimethyl-8-(1-D-ribityl)lumazine + phosphate + 2 H2O + H(+). It functions in the pathway cofactor biosynthesis; riboflavin biosynthesis; riboflavin from 2-hydroxy-3-oxobutyl phosphate and 5-amino-6-(D-ribitylamino)uracil: step 1/2. Catalyzes the formation of 6,7-dimethyl-8-ribityllumazine by condensation of 5-amino-6-(D-ribitylamino)uracil with 3,4-dihydroxy-2-butanone 4-phosphate. This is the penultimate step in the biosynthesis of riboflavin. In Alkalilimnicola ehrlichii (strain ATCC BAA-1101 / DSM 17681 / MLHE-1), this protein is 6,7-dimethyl-8-ribityllumazine synthase.